A 312-amino-acid chain; its full sequence is Beta-ketoacyl-[acyl-carrier-protein] synthase III (312 aa).

Active-site residues include cysteine 112 and histidine 237. The segment at 238 to 242 (QANIR) is ACP-binding. Asparagine 267 is an active-site residue.

Belongs to the thiolase-like superfamily. FabH family. Homodimer.

It localises to the cytoplasm. It carries out the reaction malonyl-[ACP] + acetyl-CoA + H(+) = 3-oxobutanoyl-[ACP] + CO2 + CoA. It participates in lipid metabolism; fatty acid biosynthesis. Its function is as follows. Catalyzes the condensation reaction of fatty acid synthesis by the addition to an acyl acceptor of two carbons from malonyl-ACP. Catalyzes the first condensation reaction which initiates fatty acid synthesis and may therefore play a role in governing the total rate of fatty acid production. Possesses both acetoacetyl-ACP synthase and acetyl transacylase activities. Its substrate specificity determines the biosynthesis of branched-chain and/or straight-chain of fatty acids. This Listeria welshimeri serovar 6b (strain ATCC 35897 / DSM 20650 / CCUG 15529 / CIP 8149 / NCTC 11857 / SLCC 5334 / V8) protein is Beta-ketoacyl-[acyl-carrier-protein] synthase III.